Reading from the N-terminus, the 238-residue chain is Ribosomal RNA small subunit methyltransferase G (238 aa).

Residues glycine 77, phenylalanine 82, 128-129 (AE), and arginine 147 each bind S-adenosyl-L-methionine.

The protein belongs to the methyltransferase superfamily. RNA methyltransferase RsmG family.

Its subcellular location is the cytoplasm. Specifically methylates the N7 position of guanine in position 535 of 16S rRNA. The polypeptide is Ribosomal RNA small subunit methyltransferase G (Brevibacillus brevis (strain 47 / JCM 6285 / NBRC 100599)).